We begin with the raw amino-acid sequence, 110 residues long: UPF0060 membrane protein Psyc_0916 (110 aa).

4 helical membrane passes run 7–27 (VGLF…PYLW), 33–53 (SIWL…LLSL), 63–83 (AAYG…VNGI), and 87–107 (TWDI…MFAP).

This sequence belongs to the UPF0060 family.

It is found in the cell inner membrane. The polypeptide is UPF0060 membrane protein Psyc_0916 (Psychrobacter arcticus (strain DSM 17307 / VKM B-2377 / 273-4)).